We begin with the raw amino-acid sequence, 159 residues long: Putative pre-16S rRNA nuclease (159 aa).

This sequence belongs to the YqgF nuclease family.

It localises to the cytoplasm. In terms of biological role, could be a nuclease involved in processing of the 5'-end of pre-16S rRNA. This is Putative pre-16S rRNA nuclease from Agrobacterium fabrum (strain C58 / ATCC 33970) (Agrobacterium tumefaciens (strain C58)).